Here is a 171-residue protein sequence, read N- to C-terminus: Crossover junction endodeoxyribonuclease RuvC (171 aa).

Catalysis depends on residues D7, E66, and D138. D7, E66, and D138 together coordinate Mg(2+).

This sequence belongs to the RuvC family. As to quaternary structure, homodimer which binds Holliday junction (HJ) DNA. The HJ becomes 2-fold symmetrical on binding to RuvC with unstacked arms; it has a different conformation from HJ DNA in complex with RuvA. In the full resolvosome a probable DNA-RuvA(4)-RuvB(12)-RuvC(2) complex forms which resolves the HJ. The cofactor is Mg(2+).

Its subcellular location is the cytoplasm. It carries out the reaction Endonucleolytic cleavage at a junction such as a reciprocal single-stranded crossover between two homologous DNA duplexes (Holliday junction).. Its function is as follows. The RuvA-RuvB-RuvC complex processes Holliday junction (HJ) DNA during genetic recombination and DNA repair. Endonuclease that resolves HJ intermediates. Cleaves cruciform DNA by making single-stranded nicks across the HJ at symmetrical positions within the homologous arms, yielding a 5'-phosphate and a 3'-hydroxyl group; requires a central core of homology in the junction. The consensus cleavage sequence is 5'-(A/T)TT(C/G)-3'. Cleavage occurs on the 3'-side of the TT dinucleotide at the point of strand exchange. HJ branch migration catalyzed by RuvA-RuvB allows RuvC to scan DNA until it finds its consensus sequence, where it cleaves and resolves the cruciform DNA. The chain is Crossover junction endodeoxyribonuclease RuvC from Francisella tularensis subsp. holarctica (strain FTNF002-00 / FTA).